We begin with the raw amino-acid sequence, 312 residues long: Protein-methionine-sulfoxide reductase catalytic subunit MsrP (312 aa).

Residues 1–45 constitute a signal peptide (tat-type signal); sequence MPVYRPPRIAASEITPERFFLDRRSFLAAAGGLVLGGTGMAHAAA. Mo-molybdopterin is bound by residues Asn69, 72–73, Cys126, Thr161, Asn211, Arg216, and 227–229; these read YE and GIK.

Belongs to the MsrP family. In terms of assembly, heterodimer of a catalytic subunit (MsrP) and a heme-binding subunit (MsrQ). The cofactor is Mo-molybdopterin. In terms of processing, predicted to be exported by the Tat system. The position of the signal peptide cleavage has not been experimentally proven.

It localises to the periplasm. The enzyme catalyses L-methionyl-[protein] + a quinone + H2O = L-methionyl-(S)-S-oxide-[protein] + a quinol. The catalysed reaction is L-methionyl-[protein] + a quinone + H2O = L-methionyl-(R)-S-oxide-[protein] + a quinol. Functionally, part of the MsrPQ system that repairs oxidized periplasmic proteins containing methionine sulfoxide residues (Met-O), using respiratory chain electrons. Thus protects these proteins from oxidative-stress damage caused by reactive species of oxygen and chlorine generated by the host defense mechanisms. MsrPQ is essential for the maintenance of envelope integrity under bleach stress, rescuing a wide series of structurally unrelated periplasmic proteins from methionine oxidation. The catalytic subunit MsrP is non-stereospecific, being able to reduce both (R-) and (S-) diastereoisomers of methionine sulfoxide. This Sinorhizobium fredii (strain NBRC 101917 / NGR234) protein is Protein-methionine-sulfoxide reductase catalytic subunit MsrP.